The sequence spans 114 residues: Large ribosomal subunit protein uL22 (114 aa).

This sequence belongs to the universal ribosomal protein uL22 family. As to quaternary structure, part of the 50S ribosomal subunit.

This protein binds specifically to 23S rRNA; its binding is stimulated by other ribosomal proteins, e.g. L4, L17, and L20. It is important during the early stages of 50S assembly. It makes multiple contacts with different domains of the 23S rRNA in the assembled 50S subunit and ribosome. Functionally, the globular domain of the protein is located near the polypeptide exit tunnel on the outside of the subunit, while an extended beta-hairpin is found that lines the wall of the exit tunnel in the center of the 70S ribosome. The protein is Large ribosomal subunit protein uL22 of Mycoplasmopsis agalactiae (strain NCTC 10123 / CIP 59.7 / PG2) (Mycoplasma agalactiae).